The primary structure comprises 306 residues: Leucine-rich repeat-containing protein 75B (306 aa).

The disordered stretch occupies residues 1 to 22; the sequence is MGARLGRRARADAPAAPSAGPA. The segment covering 12–22 has biased composition (low complexity); it reads DAPAAPSAGPA. LRR repeat units follow at residues 173–186 and 198–211; these read LVVLDLSFTELSDE and LPRLTQLLLNGNRL.

It belongs to the LRRC75 family.

Functionally, may suppress myogenic differentiation by modulating MYOG expression and Erk1/2 signaling. The chain is Leucine-rich repeat-containing protein 75B from Mus musculus (Mouse).